The primary structure comprises 162 residues: NADH-quinone oxidoreductase subunit I (162 aa).

4Fe-4S ferredoxin-type domains follow at residues 54-83 (RRYE…IESE) and 93-122 (TRYD…ETHI). The [4Fe-4S] cluster site is built by C63, C66, C69, C73, C102, C105, C108, and C112.

Belongs to the complex I 23 kDa subunit family. In terms of assembly, NDH-1 is composed of 14 different subunits. Subunits NuoA, H, J, K, L, M, N constitute the membrane sector of the complex. [4Fe-4S] cluster is required as a cofactor.

The protein resides in the cell inner membrane. The enzyme catalyses a quinone + NADH + 5 H(+)(in) = a quinol + NAD(+) + 4 H(+)(out). Functionally, NDH-1 shuttles electrons from NADH, via FMN and iron-sulfur (Fe-S) centers, to quinones in the respiratory chain. The immediate electron acceptor for the enzyme in this species is believed to be ubiquinone. Couples the redox reaction to proton translocation (for every two electrons transferred, four hydrogen ions are translocated across the cytoplasmic membrane), and thus conserves the redox energy in a proton gradient. In Paraburkholderia xenovorans (strain LB400), this protein is NADH-quinone oxidoreductase subunit I.